The sequence spans 283 residues: MLRIAVQSKGRLFEETMALLQEADIKISTSKRILLVQSSNFPIEVLFLRDDDIPQSVAGGVADLGIVGENEFVERKEDAEVIKRLGFSKCRLSLAIPKDVDYPGLSWFEGRKIATSYPGILKDFMDRNGIHSDIHVITGSVEIAPGISLADAIFDIVSSGSTLVSNSLKEVEVVMKSEALLIGNKNMSEEKKEILNELLFRIEAVKAAEDKKYVLMNAPTERLKEIIEVLPGMKSPTVMPLAQEGWSSVHTVLDEKRFWEIIGKLKALGAEGILVLPIEKMIL.

The protein belongs to the ATP phosphoribosyltransferase family. Long subfamily. Requires Mg(2+) as cofactor.

It is found in the cytoplasm. It catalyses the reaction 1-(5-phospho-beta-D-ribosyl)-ATP + diphosphate = 5-phospho-alpha-D-ribose 1-diphosphate + ATP. It participates in amino-acid biosynthesis; L-histidine biosynthesis; L-histidine from 5-phospho-alpha-D-ribose 1-diphosphate: step 1/9. Its activity is regulated as follows. Feedback inhibited by histidine. In terms of biological role, catalyzes the condensation of ATP and 5-phosphoribose 1-diphosphate to form N'-(5'-phosphoribosyl)-ATP (PR-ATP). Has a crucial role in the pathway because the rate of histidine biosynthesis seems to be controlled primarily by regulation of HisG enzymatic activity. The sequence is that of ATP phosphoribosyltransferase from Phocaeicola vulgatus (strain ATCC 8482 / DSM 1447 / JCM 5826 / CCUG 4940 / NBRC 14291 / NCTC 11154) (Bacteroides vulgatus).